The primary structure comprises 296 residues: Elongation factor Ts (296 aa).

An involved in Mg(2+) ion dislocation from EF-Tu region spans residues 79 to 82; it reads TDFV.

Belongs to the EF-Ts family.

It is found in the cytoplasm. Its function is as follows. Associates with the EF-Tu.GDP complex and induces the exchange of GDP to GTP. It remains bound to the aminoacyl-tRNA.EF-Tu.GTP complex up to the GTP hydrolysis stage on the ribosome. This chain is Elongation factor Ts (tsf), found in Spiroplasma citri.